The sequence spans 260 residues: 3'-5' ssDNA/RNA exonuclease TatD (260 aa).

Residues glutamate 92, histidine 128, and histidine 153 each coordinate a divalent metal cation.

It belongs to the metallo-dependent hydrolases superfamily. TatD-type hydrolase family. TatD subfamily. In terms of assembly, monomer. Requires Mg(2+) as cofactor.

The protein resides in the cytoplasm. In terms of biological role, 3'-5' exonuclease that prefers single-stranded DNA and RNA. May play a role in the H(2)O(2)-induced DNA damage repair. This is 3'-5' ssDNA/RNA exonuclease TatD from Pectobacterium atrosepticum (strain SCRI 1043 / ATCC BAA-672) (Erwinia carotovora subsp. atroseptica).